Here is a 540-residue protein sequence, read N- to C-terminus: CTP synthase (540 aa).

The amidoligase domain stretch occupies residues 1–264; sequence MQYIVVTGGV…ISYLSKLSGK (264 aa). Ser12 is a binding site for CTP. UTP is bound at residue Ser12. 13-18 is a binding site for ATP; it reads GLGKGT. Tyr53 contacts L-glutamine. Residue Asp70 participates in ATP binding. Residues Asp70 and Glu140 each contribute to the Mg(2+) site. CTP contacts are provided by residues 147-149, 185-190, and Arg221; these read DIE and KTKPTQ. UTP-binding positions include 185 to 190 and Arg221; that span reads KTKPTQ. A Glutamine amidotransferase type-1 domain is found at 294-527; that stretch reads YVDLHDAYIS…VQQALIYKKN (234 aa). Gly347 contacts L-glutamine. Cys374 serves as the catalytic Nucleophile; for glutamine hydrolysis. Residues 375–378, Glu398, and Arg455 each bind L-glutamine; that span reads LGFQ. Residues His500 and Glu502 contribute to the active site.

The protein belongs to the CTP synthase family. In terms of assembly, homotetramer.

It catalyses the reaction UTP + L-glutamine + ATP + H2O = CTP + L-glutamate + ADP + phosphate + 2 H(+). The enzyme catalyses L-glutamine + H2O = L-glutamate + NH4(+). It carries out the reaction UTP + NH4(+) + ATP = CTP + ADP + phosphate + 2 H(+). It participates in pyrimidine metabolism; CTP biosynthesis via de novo pathway; CTP from UDP: step 2/2. With respect to regulation, allosterically activated by GTP, when glutamine is the substrate; GTP has no effect on the reaction when ammonia is the substrate. The allosteric effector GTP functions by stabilizing the protein conformation that binds the tetrahedral intermediate(s) formed during glutamine hydrolysis. Inhibited by the product CTP, via allosteric rather than competitive inhibition. Its function is as follows. Catalyzes the ATP-dependent amination of UTP to CTP with either L-glutamine or ammonia as the source of nitrogen. Regulates intracellular CTP levels through interactions with the four ribonucleotide triphosphates. The polypeptide is CTP synthase (Thermoplasma volcanium (strain ATCC 51530 / DSM 4299 / JCM 9571 / NBRC 15438 / GSS1)).